The primary structure comprises 185 residues: UPF0301 protein Csal_0058 (185 aa).

Belongs to the UPF0301 (AlgH) family.

The sequence is that of UPF0301 protein Csal_0058 from Chromohalobacter salexigens (strain ATCC BAA-138 / DSM 3043 / CIP 106854 / NCIMB 13768 / 1H11).